The following is an 871-amino-acid chain: DNA mismatch repair protein MutS (871 aa).

ATP is bound at residue 630 to 637 (GPNMGGKS). Positions 830-849 (KEEPESKSASPVEAALAGIN) are disordered.

Belongs to the DNA mismatch repair MutS family.

Functionally, this protein is involved in the repair of mismatches in DNA. It is possible that it carries out the mismatch recognition step. This protein has a weak ATPase activity. The chain is DNA mismatch repair protein MutS from Verminephrobacter eiseniae (strain EF01-2).